We begin with the raw amino-acid sequence, 587 residues long: MDTVKERVLAPGKEKMRNLAGKTLGHMHRVMERKQKTGEVIELTEDGRPMHMPEKKAPLVDCTCFGLPRRYIIAIMSGLGFCISFGIRCNLGVAIVDMVNNSTIHKGGKIIIKGKAKFNWDPETVGMIHGSFFWGYTVTQIPGGYISSRLAANRVFGAAILLTSTLNMFIPSAARVHYGCVMFVRILQGLVEGVTYPACHGIWSKWAPPLERSRLATTSFCGSYAGAVVAMPLAGILVQYSGWSSVFYIYGSFGIVWYMFWILVSYESPADHPTITDEERTYIEESIGESAKLLGAMEKYKTPWRKFFTSMPVYAIIVANFCRSWTFYLLLISQPAYFEEVFGFEISKVGMVSALPHLVMTIIVPIGGQLADYLRSKNILTTTTVRKIMNCGGFGMEATLLLVVGFSHSKGVAISFLVLAVGFSGFAISGFNVNHLDIAPRYASILMGISNGVGTLSGMVCPLIVGAMTKNKTREEWQNVFLIASLVHYGGVIFYGIFASGEKQPWADPEETSDEKCGFIDEDELAEETGDITLSHAPFGAQGALGAPAKTYGATTQLNGGWAKGWEKTEEFIQEDAERTYTGDGYS.

At 1–71 (MDTVKERVLA…CTCFGLPRRY (71 aa)) the chain is on the cytoplasmic side. A helical transmembrane segment spans residues 72–92 (IIAIMSGLGFCISFGIRCNLG). At 93-125 (VAIVDMVNNSTIHKGGKIIIKGKAKFNWDPETV) the chain is on the vesicular side. Residues asparagine 100 and asparagine 101 are each glycosylated (N-linked (GlcNAc...) asparagine). Residues 126–146 (GMIHGSFFWGYTVTQIPGGYI) form a helical membrane-spanning segment. The Cytoplasmic segment spans residues 147-149 (SSR). A helical transmembrane segment spans residues 150–170 (LAANRVFGAAILLTSTLNMFI). Residues 171–180 (PSAARVHYGC) lie on the Vesicular side of the membrane. Residues 181–203 (VMFVRILQGLVEGVTYPACHGIW) traverse the membrane as a helical segment. The Cytoplasmic portion of the chain corresponds to 204–217 (SKWAPPLERSRLAT). The helical transmembrane segment at 218 to 238 (TSFCGSYAGAVVAMPLAGILV) threads the bilayer. The Vesicular segment spans residues 239 to 245 (QYSGWSS). A helical transmembrane segment spans residues 246-266 (VFYIYGSFGIVWYMFWILVSY). Residues 267–311 (ESPADHPTITDEERTYIEESIGESAKLLGAMEKYKTPWRKFFTSM) are Cytoplasmic-facing. A helical transmembrane segment spans residues 312 to 332 (PVYAIIVANFCRSWTFYLLLI). At 333 to 350 (SQPAYFEEVFGFEISKVG) the chain is on the vesicular side. Residues 351–371 (MVSALPHLVMTIIVPIGGQLA) traverse the membrane as a helical segment. Over 372 to 387 (DYLRSKNILTTTTVRK) the chain is Cytoplasmic. The helical transmembrane segment at 388–408 (IMNCGGFGMEATLLLVVGFSH) threads the bilayer. At 409–410 (SK) the chain is on the vesicular side. The helical transmembrane segment at 411-431 (GVAISFLVLAVGFSGFAISGF) threads the bilayer. At 432 to 444 (NVNHLDIAPRYAS) the chain is on the cytoplasmic side. Residues 445–465 (ILMGISNGVGTLSGMVCPLIV) form a helical membrane-spanning segment. At 466–479 (GAMTKNKTREEWQN) the chain is on the vesicular side. Residue asparagine 471 is glycosylated (N-linked (GlcNAc...) asparagine). Residues 480–500 (VFLIASLVHYGGVIFYGIFAS) traverse the membrane as a helical segment. Over 501-587 (GEKQPWADPE…ERTYTGDGYS (87 aa)) the chain is Cytoplasmic.

It belongs to the major facilitator superfamily. Sodium/anion cotransporter family. VGLUT subfamily. In terms of tissue distribution, expressed in spinal cord.

Its subcellular location is the cytoplasmic vesicle. It localises to the secretory vesicle. It is found in the synaptic vesicle membrane. The protein resides in the membrane. The protein localises to the synapse. Its subcellular location is the synaptosome. It localises to the cell membrane. The catalysed reaction is L-glutamate(out) = L-glutamate(in). It carries out the reaction 3 Na(+)(out) + phosphate(out) = 3 Na(+)(in) + phosphate(in). The enzyme catalyses phosphate(in) = phosphate(out). It catalyses the reaction K(+)(in) + H(+)(out) = K(+)(out) + H(+)(in). The catalysed reaction is chloride(in) = chloride(out). Its activity is regulated as follows. Chloride channel activity is allosterically activated by lumenal H(+) and Cl(-) leading to synaptic vesicles acidification. The L-glutamate transport activity is allosterically activated by lumenal H(+) and Cl(-). The allosteric requirement for H(+) efficiently prevents non-vesicular efflux across the plasma membrane. The L-glutamate uniporter activity exhibits a biphasic dependence on chloride concentration. In terms of biological role, multifunctional transporter that transports L-glutamate as well as multiple ions such as chloride, proton, potassium, sodium and phosphate. At the synaptic vesicle membrane, mainly functions as a uniporter which transports preferentially L-glutamate but also, phosphate from the cytoplasm into synaptic vesicles at presynaptic nerve terminals of excitatory neural cells. The L-glutamate or phosphate uniporter activity is electrogenic and is driven by the proton electrochemical gradient, mainly by the electrical gradient established by the vacuolar H(+)-ATPase across the synaptic vesicle membrane. In addition, functions as a chloride channel that allows a chloride permeation through the synaptic vesicle membrane therefore affects the proton electrochemical gradient and promotes synaptic vesicles acidification. Moreover, functions as a vesicular K(+)/H(+) antiport allowing to maintain the electrical gradient and to decrease chemical gradient and therefore sustain vesicular L-glutamate uptake. The vesicular H(+)/H(+) antiport activity is electroneutral. At the plasma membrane, following exocytosis, functions as a symporter of Na(+) and phosphate from the extracellular space to the cytoplasm allowing synaptic phosphate homeostasis regulation. The symporter activity is driven by an inside negative membrane potential and is electrogenic. Also involved in the regulation of retinal hyaloid vessel regression during postnatal development. May also play a role in the endocrine L-glutamatergic system of other tissues such as pineal gland and pancreas. The sequence is that of Vesicular glutamate transporter 2.2 (slc17a6a) from Danio rerio (Zebrafish).